A 554-amino-acid polypeptide reads, in one-letter code: MATCLFLLGLFLLLPRPVPAPCYTATRSECKQKHKFVPGVWMAGEGMDVTTLRRSGSFPVNTQRFLRPDRTCTLCKNSLMRDATQRLPVAITHWRPHSSHCQRNVAAAKVHSTEGVAREAAANINNDWRVGLDVNPRPEANMRASVAGSHSKVANFAAEKTYQDQYNFNSDTVECRMYSFRLVQKPPLHLDFKKALRALPRNFNSSTEHAYHRLISSYGTHFITAVDLGGRISVLTALRTCQLTLNGLTADEVGDCLNVEAQVSIGAQASVSSEYKACEEKKKQHKMATSFHQTYRERHVEVLGGPLDSTHDLLFGNQATPEQFSTWTASLPSNPGLVDYSLEPLHTLLEEQNPKREALRQAISHYIMSRARWQNCSRPCRSGQHKSSHDSCQCECQDSKVTNQDCCPRQRGLAHLVVSNFRAEHLWGDYTTATDAYLKVFFGGQEFRTGVVWNNNNPRWTDKMDFENVLLSTGGPLRVQVWDADYGWDDDLLGSCDRSPHSGFHEVTCELNHGRVKFSYHAKCLPHLTGGTCLEYAPQGLLGDPPGNRSGAVW.

The signal sequence occupies residues 1-20 (MATCLFLLGLFLLLPRPVPA). 3 disulfides stabilise this stretch: cysteine 22–cysteine 75, cysteine 30–cysteine 72, and cysteine 101–cysteine 175. Positions 26-374 (TRSECKQKHK…HYIMSRARWQ (349 aa)) constitute an MACPF domain. Residues 128–148 (WRVGLDVNPRPEANMRASVAG) form a beta stranded membrane-spanning segment. A glycan (N-linked (GlcNAc...) asparagine) is linked at asparagine 204. 4 disulfides stabilise this stretch: cysteine 241/cysteine 407, cysteine 376/cysteine 392, cysteine 380/cysteine 394, and cysteine 396/cysteine 406. Residues 256-278 (CLNVEAQVSIGAQASVSSEYKAC) traverse the membrane as a beta stranded segment. Asparagine 375 carries an N-linked (GlcNAc...) asparagine glycan. One can recognise an EGF-like domain in the interval 375 to 407 (NCSRPCRSGQHKSSHDSCQCECQDSKVTNQDCC). In terms of domain architecture, C2 spans 395-513 (ECQDSKVTNQ…FHEVTCELNH (119 aa)). 14 residues coordinate Ca(2+): glycine 428, aspartate 429, threonine 432, alanine 433, aspartate 435, asparagine 454, glutamate 467, aspartate 483, alanine 484, aspartate 485, tryptophan 488, aspartate 489, aspartate 490, and aspartate 491. Intrachain disulfides connect cysteine 496/cysteine 509 and cysteine 524/cysteine 533. The N-linked (GlcNAc...) asparagine glycan is linked to asparagine 548.

Belongs to the complement C6/C7/C8/C9 family. As to quaternary structure, monomer, as soluble protein. Homooligomer; homooligomerizes to form a pore-forming ring. Ca(2+) is required as a cofactor. N-glycosylated. The glycosylation sites are facing the interior of the pore. Detected in cytotoxic T-lymphocytes and natural killer cells.

Its subcellular location is the cytolytic granule. The protein resides in the secreted. It localises to the cell membrane. The protein localises to the endosome lumen. Pore-forming protein that plays a key role in granzyme-mediated programmed cell death, and in defense against virus-infected or neoplastic cells. Can insert into the membrane of target cells in its calcium-bound form, oligomerize and form large pores. Promotes cytolysis and apoptosis of target cells by mediating the passage and uptake of cytotoxic granzymes. Facilitates the delivery of cationic cargo protein, while anionic or neural proteins are not delivered efficiently. Perforin pores allow the release of mature caspase-7 (CASP7) into the extracellular milieu. The polypeptide is Perforin-1 (Prf1) (Mus musculus (Mouse)).